The chain runs to 719 residues: NF-kappa-B inhibitor zeta (719 aa).

A compositionally biased stretch (low complexity) spans 46–81; that stretch reads GACDGGCSASGPSAPGSPGSDSSDFSSASSVSSCGA. Positions 46–97 are disordered; it reads GACDGGCSASGPSAPGSPGSDSSDFSSASSVSSCGAVESRPRGGARAERLQV. The segment covering 84 to 97 has biased composition (basic and acidic residues); the sequence is SRPRGGARAERLQV. The OCA domain maps to 108–130; sequence RGPFQGVRVKNSVKELLLHIRSH. The Nuclear localization signal motif lies at 164-179; it reads KRKGSDSLSDGPACKR. 2 disordered regions span residues 188–210 and 289–343; these read LTPP…ESKQ and YSPQ…FAPL. Positions 201-210 are enriched in basic and acidic residues; it reads EDVHHNESKQ. The segment at 322–394 is required for transcriptional activity; it reads SYEPHLFGRE…LARPDASSTP (73 aa). The segment at 405–719 is interaction with NFKB1/p50; it reads GGNPMSTTQL…KSIQQRAPPY (315 aa). 7 ANK repeats span residues 444–473, 480–509, 513–542, 552–581, 583–608, 613–642, and 649–682; these read DGDT…ALHM, NGQS…QVNT, WGRT…GSNQ, DGLT…HSPE, QELL…AVEA, SGRT…CLSF, and NGNT…DPST.

In terms of assembly, interacts with NFKB1/p50. Interacts with RELA. Interacts with AKIRIN2.

The protein localises to the nucleus. Functionally, involved in regulation of NF-kappa-B transcription factor complexes. Inhibits NF-kappa-B activity without affecting its nuclear translocation upon stimulation. Inhibits DNA-binding of RELA and NFKB1/p50, and of the NF-kappa-B p65-p50 heterodimer and the NF-kappa-B p50-p50 homodimer. Also seems to activate NF-kappa-B-mediated transcription. In vitro, upon association with NFKB1/p50 has transcriptional activation activity and, together with NFKB1/p50 and RELA, is recruited to LCN2 promoters. Promotes transcription of LCN2 and DEFB4. Is recruited to IL-6 promoters and activates IL-6 but decreases TNF-alpha production in response to LPS. Seems to be involved in the induction of inflammatory genes activated through TLR/IL-1 receptor signaling. Involved in the induction of T helper 17 cells (Th17) differentiation upon recognition of antigen by T cell antigen receptor (TCR). The protein is NF-kappa-B inhibitor zeta (NFKBIZ) of Bos taurus (Bovine).